A 215-amino-acid polypeptide reads, in one-letter code: Ribose-5-phosphate isomerase A (215 aa).

Residues Thr26 to Thr29, Asp79 to Asp82, and Lys92 to Gly95 each bind substrate. Residue Glu101 is the Proton acceptor of the active site. Lys119 is a binding site for substrate.

This sequence belongs to the ribose 5-phosphate isomerase family. Homodimer.

It carries out the reaction aldehydo-D-ribose 5-phosphate = D-ribulose 5-phosphate. Its pathway is carbohydrate degradation; pentose phosphate pathway; D-ribose 5-phosphate from D-ribulose 5-phosphate (non-oxidative stage): step 1/1. Its function is as follows. Catalyzes the reversible conversion of ribose-5-phosphate to ribulose 5-phosphate. The chain is Ribose-5-phosphate isomerase A from Xanthomonas euvesicatoria pv. vesicatoria (strain 85-10) (Xanthomonas campestris pv. vesicatoria).